We begin with the raw amino-acid sequence, 507 residues long: TOM1-like protein 2 (507 aa).

The VHS domain occupies 20 to 152 (ATDGSLQSED…ELKRRGIEFP (133 aa)). Position 160 is a phosphoserine (serine 160). A Phosphothreonine modification is found at threonine 164. The tract at residues 164 to 200 (TPQRSVPEMDPAATIPRSQTQPRTTAGTYSSPPPASY) is disordered. The 89-residue stretch at 219–307 (EQIARLRSEL…VFLRYERFER (89 aa)) folds into the GAT domain. Residues 329 to 334 (NLIDLG) carry the Clathrin-binding motif. The tract at residues 466-507 (ERAKAAETVPDLPSPPTEAPAPASNTSTRKKPERSDDALFAL) is disordered. A compositionally biased stretch (basic and acidic residues) spans 498–507 (ERSDDALFAL).

The protein belongs to the TOM1 family. In terms of assembly, interacts with clathrin, SRC and TOLLIP. Interacts with MYO6. In terms of tissue distribution, ubiquitously expressed. Splicing pattern displays tissue specific variation.

Functionally, acts as a MYO6/Myosin VI adapter protein that targets myosin VI to endocytic structures. May also play a role in recruiting clathrin to endosomes. May regulate growth factor-induced mitogenic signaling. The protein is TOM1-like protein 2 (Tom1l2) of Mus musculus (Mouse).